Consider the following 414-residue polypeptide: 2-acylphloroglucinol 4-prenyltransferase (414 aa).

The N-terminal 86 residues, 1–86 (MELSSVSSFS…LKPLSIFSCK (86 aa)), are a transit peptide targeting the chloroplast. A run of 8 helical transmembrane segments spans residues 153–173 (FSWP…GSCF), 201–221 (ISVE…FILI), 229–249 (LLTS…VPPF), 256–276 (ITAF…VYYA), 281–301 (LGLA…ITFM), 336–356 (LLGT…AIIW), 359–379 (AFKS…LFFQ), and 394–414 (KSFY…YLFI).

This sequence belongs to the UbiA prenyltransferase family. Component an active demethylxanthohumol (DMX) biosynthetic metabolon in glandular trichomes (lupulin glands) that encompasses a chalcone synthase (CHS) and a membrane-bound prenyltransferase. Interacts with PT2, forming a functional metabolon. Interacts with CHIL2; this interaction promotes catalytic activity. Mg(2+) is required as a cofactor. Expressed in trichomes.

It is found in the plastid. The protein resides in the chloroplast membrane. It catalyses the reaction 2',4,4',6'-tetrahydroxychalcone + dimethylallyl diphosphate = desmethylxanthohumol + diphosphate. It carries out the reaction a 2-acylphloroglucinol + dimethylallyl diphosphate = a 2-acyl-4-prenylphloroglucinol + diphosphate. Its pathway is secondary metabolite biosynthesis. Its activity is regulated as follows. Stimulated by CHIL2 but inhibited by CHIL1. Functionally, involved in the biosynthesis of prenylated phenolics natural products which contribute to the bitter taste of beer and display broad biological activities. Catalyzes the first prenylation step in the beta-bitter acid pathway. Uses dimethylallyl diphosphate (DMAPP) as the prenyl donor. The protein is 2-acylphloroglucinol 4-prenyltransferase of Humulus lupulus (European hop).